The sequence spans 410 residues: MSSDPNFSLTSFLECLNEIEHEFLRDKEENRPIIVRKLRELQQKTPNHVADLAHDSKTIEQIHQTAHRIKVAVKTFIRIDQKFVSLCSEVVHGTSKVMEEFNVVSPAVVCRNLSEDLPAYHMRKHFLLTLDNPYPTQEEKQNLVRLTNESTVRVGSSNPARPPLEVHQLTLWFINARRRSGWSHILKKFAREDRSRMKHLVRAKLSSSNQSTPPSPTSEYPSNNLDDFLSDNLGRPLTPADKQQFEDDWASMISWIKYGVKEKVGDWVYDLCAANKKTPKPGMPRPVTTVTKRQPARKTKPAAKPKSRTANPRASTTPSIDSTLDSSKLESTPELSMCSTADTSFSTFGSSLSMSHYNPFQDGNDILQSPTVKARGNRKVKALPKRAGKQQPDEVDNGKIPFLCLSVAFV.

Positions 1-110 (MSSDPNFSLT…FNVVSPAVVC (110 aa)) are variable domain between B alleles. Positions 107–184 (AVVCRNLSED…NARRRSGWSH (78 aa)) form a DNA-binding region, homeobox; TALE-type. Residues 111-410 (RNLSEDLPAY…PFLCLSVAFV (300 aa)) are highly conserved between B alleles. Disordered stretches follow at residues 201-241 (VRAK…TPAD), 275-336 (NKKT…PELS), and 366-395 (ILQS…PDEV). Residues 206 to 222 (SSSNQSTPPSPTSEYPS) are compositionally biased toward low complexity. Positions 276 to 308 (KKTPKPGMPRPVTTVTKRQPARKTKPAAKPKSR) match the Nuclear localization signal motif. The span at 294–307 (QPARKTKPAAKPKS) shows a compositional bias: basic residues. The span at 312–336 (PRASTTPSIDSTLDSSKLESTPELS) shows a compositional bias: polar residues. A not essential for B5 function region spans residues 333–410 (PELSMCSTAD…PFLCLSVAFV (78 aa)). Residues 375–388 (RGNRKVKALPKRAG) are compositionally biased toward basic residues.

Belongs to the TALE/M-ATYP homeobox family.

It is found in the nucleus. Its function is as follows. The B locus has at least 25 alleles, and any combination of two different B alleles yields a multimeric regulatory protein, that activates genes responsible for the pathogenicity and for the sexual development of the fungus within the corn plant. The sequence is that of Mating-type locus allele B5 protein from Mycosarcoma maydis (Corn smut fungus).